We begin with the raw amino-acid sequence, 177 residues long: Translation initiation factor IF-3 (177 aa).

It belongs to the IF-3 family. Monomer.

It localises to the cytoplasm. Functionally, IF-3 binds to the 30S ribosomal subunit and shifts the equilibrium between 70S ribosomes and their 50S and 30S subunits in favor of the free subunits, thus enhancing the availability of 30S subunits on which protein synthesis initiation begins. In Nitratiruptor sp. (strain SB155-2), this protein is Translation initiation factor IF-3.